We begin with the raw amino-acid sequence, 57 residues long: uncharacterized protein (57 aa).

An N-terminal signal peptide occupies residues 1–20; sequence MKKLALILFMGTLVSFYADA.

This is an uncharacterized protein from Escherichia coli (strain K12).